A 352-amino-acid chain; its full sequence is C-C chemokine receptor type 5 (352 aa).

Over 1-30 the chain is Extracellular; it reads MDYQVSSPTYDIDYYTSEPCQKINVKQIAG. Position 3 is a sulfotyrosine (Tyr-3). O-linked (GalNAc...) serine glycans are attached at residues Ser-6 and Ser-7. Tyr-10, Tyr-14, and Tyr-15 each carry sulfotyrosine. Intrachain disulfides connect Cys-20–Cys-269 and Cys-101–Cys-178. A helical membrane pass occupies residues 31-58; the sequence is RLLPPLYSLVFIFGFVGNILVVLILINC. Over 59–68 the chain is Cytoplasmic; that stretch reads KRLKSMTDIY. A helical membrane pass occupies residues 69–89; it reads LLNLAISDLLFLLTVPFWAHY. At 90-102 the chain is on the extracellular side; it reads AAAQWDFGNTMCQ. The helical transmembrane segment at 103-124 threads the bilayer; the sequence is LLTGLYFIGFFSGIFFIILLTI. Residues 125–141 lie on the Cytoplasmic side of the membrane; that stretch reads DRYLAIVHAVFALKART. A helical transmembrane segment spans residues 142-166; sequence VTFGVVTSVITWVVAVFASLPGIIF. Topologically, residues 167 to 198 are extracellular; sequence TRSQREGLHYTCSSHFPYSQYQFWKNFQTLKI. The chain crosses the membrane as a helical span at residues 199–218; sequence VILGLVLPLLVMVICYSGIL. Over 219–235 the chain is Cytoplasmic; the sequence is KTLLRCRNEKKRHRAVR. The chain crosses the membrane as a helical span at residues 236 to 260; it reads LIFTIMIVYFLFWAPYNIVLLLNTF. Residues 261-277 are Extracellular-facing; sequence QEFFGLNNCSSSNRLDQ. The helical transmembrane segment at 278-301 threads the bilayer; the sequence is AMQVTETLGMTHCCINPIIYAFVG. Residues 302 to 352 lie on the Cytoplasmic side of the membrane; the sequence is EKFRNYLLVFFQKHIAKRFCKCCSIFQQEAPERASSVYTRSTGEQEISVGL. Residues Cys-321, Cys-323, and Cys-324 are each lipidated (S-palmitoyl cysteine). A phosphoserine; by BARK1 mark is found at Ser-336, Ser-337, Ser-342, and Ser-349.

It belongs to the G-protein coupled receptor 1 family. In terms of assembly, interacts with PRAF2. Efficient ligand binding to CCL3/MIP-1alpha and CCL4/MIP-1beta requires sulfation, O-glycosylation and sialic acid modifications. Glycosylation on Ser-6 is required for efficient binding of CCL4. Interacts with GRK2. Interacts with ARRB1 and ARRB2. Interacts with CNIH4. Interacts with S100A4; this interaction stimulates T-lymphocyte chemotaxis. Sulfated on at least 2 of the N-terminal tyrosines. Sulfation is required for efficient binding of the chemokines, CCL3 and CCL4. Post-translationally, palmitoylation in the C-terminal is important for cell surface expression. In terms of processing, phosphorylation on serine residues in the C-terminal is stimulated by binding CC chemokines especially by APO-RANTES. O-glycosylated, but not N-glycosylated. Ser-6 appears to be the major site even if Ser-7 may be also O-glycosylated. Also sialylated glycans present which contribute to chemokine binding. Thr-16 and Ser-17 may also be glycosylated and, if so, with small moieties such as a T-antigen.

Its subcellular location is the cell membrane. Receptor for a number of inflammatory CC-chemokines including CCL3/MIP-1-alpha, CCL4/MIP-1-beta and RANTES and subsequently transduces a signal by increasing the intracellular calcium ion level. May play a role in the control of granulocytic lineage proliferation or differentiation. Participates in T-lymphocyte migration to the infection site by acting as a chemotactic receptor. In Theropithecus gelada (Gelada baboon), this protein is C-C chemokine receptor type 5 (CCR5).